Consider the following 179-residue polypeptide: Ubiquitin-conjugating enzyme E2 C (179 aa).

Over residues 1-14 (MASQNRDPAATSVT) the composition is skewed to polar residues. Residues 1–31 (MASQNRDPAATSVTAARKGAEPSGGAARGPV) are disordered. An N-acetylalanine modification is found at alanine 2. Serine 3 carries the post-translational modification Phosphoserine. A UBC core domain is found at 30–175 (PVGKRLQQEL…LQETYSKQVT (146 aa)). Cysteine 114 functions as the Glycyl thioester intermediate in the catalytic mechanism.

The protein belongs to the ubiquitin-conjugating enzyme family. Component of the APC/C complex, composed of at least 14 distinct subunits that assemble into a complex of at least 19 chains with a combined molecular mass of around 1.2 MDa. Within this complex, directly interacts with ANAPC2. In terms of processing, autoubiquitinated by the APC/C complex, leading to its degradation by the proteasome. Its degradation plays a central role in APC/C regulation, allowing cyclin-A accumulation before S phase entry. APC/C substrates inhibit the autoubiquitination of UBE2C/UBCH10 but not its E2 function, hence APC/C remaining active until its substrates have been destroyed.

The catalysed reaction is S-ubiquitinyl-[E1 ubiquitin-activating enzyme]-L-cysteine + [E2 ubiquitin-conjugating enzyme]-L-cysteine = [E1 ubiquitin-activating enzyme]-L-cysteine + S-ubiquitinyl-[E2 ubiquitin-conjugating enzyme]-L-cysteine.. It catalyses the reaction S-ubiquitinyl-[E1 ubiquitin-activating enzyme]-L-cysteine + [acceptor protein]-L-lysine = [E1 ubiquitin-activating enzyme]-L-cysteine + N(6)-monoubiquitinyl-[acceptor protein]-L-lysine.. Its pathway is protein modification; protein ubiquitination. In terms of biological role, accepts ubiquitin from the E1 complex and catalyzes its covalent attachment to other proteins. In vitro catalyzes 'Lys-11'- and 'Lys-48'-linked polyubiquitination. Acts as an essential factor of the anaphase promoting complex/cyclosome (APC/C), a cell cycle-regulated ubiquitin ligase that controls progression through mitosis. Acts by initiating 'Lys-11'-linked polyubiquitin chains on APC/C substrates, leading to the degradation of APC/C substrates by the proteasome and promoting mitotic exit. The protein is Ubiquitin-conjugating enzyme E2 C (UBE2C) of Macaca fascicularis (Crab-eating macaque).